Here is a 187-residue protein sequence, read N- to C-terminus: Large ribosomal subunit protein uL5 (187 aa).

The protein belongs to the universal ribosomal protein uL5 family. As to quaternary structure, part of the 50S ribosomal subunit; part of the 5S rRNA/L5/L18/L25 subcomplex. Contacts the 5S rRNA and the P site tRNA. Forms a bridge to the 30S subunit in the 70S ribosome.

Its function is as follows. This is one of the proteins that bind and probably mediate the attachment of the 5S RNA into the large ribosomal subunit, where it forms part of the central protuberance. In the 70S ribosome it contacts protein S13 of the 30S subunit (bridge B1b), connecting the 2 subunits; this bridge is implicated in subunit movement. Contacts the P site tRNA; the 5S rRNA and some of its associated proteins might help stabilize positioning of ribosome-bound tRNAs. The protein is Large ribosomal subunit protein uL5 of Brachyspira hyodysenteriae (strain ATCC 49526 / WA1).